The primary structure comprises 381 residues: Dof zinc finger protein 2 (381 aa).

The interval 19 to 81 (MLMGANPNPN…ARPQKEKALN (63 aa)) is disordered. Composition is skewed to low complexity over residues 23–32 (ANPNPNGSSN) and 40–59 (SAASAQRPIAPPAAGAAAGA). A compositionally biased stretch (basic and acidic residues) spans 68-79 (TERRARPQKEKA). The Dof-type zinc finger occupies 80–134 (LNCPRCNSTNTKFCYYNNYSLQQPRYFCKTCRRYWTEGGSLRNVPVGGGSRKNKR). Zn(2+) is bound by residues Cys82, Cys85, Cys107, and Cys110. The tract at residues 329–349 (AGDANSGGDHQYDHGKNQGGG) is disordered.

It localises to the nucleus. In terms of biological role, transcription factor that may transactivate seed storage protein genes in developing seeds. The protein is Dof zinc finger protein 2 of Oryza sativa subsp. japonica (Rice).